The chain runs to 154 residues: MKTLKGHLSAKNLRIAIVGSCFNQAMADALVSGTQETFLKFGGSEDGLMTIRVPGAFEIPCTIKKLLSSERKFDAIVACGVLIQGETDHYNQIVNQVAAGIGALSLEFCLPITLSIVAAPSAEIAWQRSGIKGRHLGVSGMTTAIEMATLFTQI.

Residues F22, 56–58 (AFE), and 81–83 (VLI) each bind 5-amino-6-(D-ribitylamino)uracil. Position 86 to 87 (86 to 87 (ET)) interacts with (2S)-2-hydroxy-3-oxobutyl phosphate. H89 serves as the catalytic Proton donor. Position 114 (L114) interacts with 5-amino-6-(D-ribitylamino)uracil. R128 contacts (2S)-2-hydroxy-3-oxobutyl phosphate.

Belongs to the DMRL synthase family.

The enzyme catalyses (2S)-2-hydroxy-3-oxobutyl phosphate + 5-amino-6-(D-ribitylamino)uracil = 6,7-dimethyl-8-(1-D-ribityl)lumazine + phosphate + 2 H2O + H(+). Its pathway is cofactor biosynthesis; riboflavin biosynthesis; riboflavin from 2-hydroxy-3-oxobutyl phosphate and 5-amino-6-(D-ribitylamino)uracil: step 1/2. Its function is as follows. Catalyzes the formation of 6,7-dimethyl-8-ribityllumazine by condensation of 5-amino-6-(D-ribitylamino)uracil with 3,4-dihydroxy-2-butanone 4-phosphate. This is the penultimate step in the biosynthesis of riboflavin. This chain is 6,7-dimethyl-8-ribityllumazine synthase, found in Chlamydia pneumoniae (Chlamydophila pneumoniae).